The primary structure comprises 439 residues: Probable tRNA pseudouridine synthase D (439 aa).

Aspartate 87 serves as the catalytic Nucleophile. One can recognise a TRUD domain in the interval 166 to 391 (GVPNFFGIQR…SKGLRREILL (226 aa)).

It belongs to the pseudouridine synthase TruD family.

It catalyses the reaction uridine(13) in tRNA = pseudouridine(13) in tRNA. Could be responsible for synthesis of pseudouridine from uracil-13 in transfer RNAs. This Methanococcoides burtonii (strain DSM 6242 / NBRC 107633 / OCM 468 / ACE-M) protein is Probable tRNA pseudouridine synthase D.